We begin with the raw amino-acid sequence, 272 residues long: Phosphoglycolate phosphatase (272 aa).

The active-site Nucleophile is Asp-19. Residues Asp-19, Asp-21, and Asp-182 each coordinate Mg(2+).

The protein belongs to the HAD-like hydrolase superfamily. CbbY/CbbZ/Gph/YieH family. Mg(2+) is required as a cofactor.

It catalyses the reaction 2-phosphoglycolate + H2O = glycolate + phosphate. Its pathway is organic acid metabolism; glycolate biosynthesis; glycolate from 2-phosphoglycolate: step 1/1. Functionally, specifically catalyzes the dephosphorylation of 2-phosphoglycolate. Is involved in the dissimilation of the intracellular 2-phosphoglycolate formed during the DNA repair of 3'-phosphoglycolate ends, a major class of DNA lesions induced by oxidative stress. This chain is Phosphoglycolate phosphatase, found in Pseudomonas fluorescens (strain Pf0-1).